The following is a 418-amino-acid chain: Tyrosine--tRNA ligase (418 aa).

Tyr38 is an L-tyrosine binding site. The short motif at 43–52 is the 'HIGH' region element; it reads CTARSLHIGS. Positions 175 and 179 each coordinate L-tyrosine. The 'KMSKS' region signature appears at 235-239; sequence KMGKT. Lys238 contributes to the ATP binding site. Positions 348-413 constitute an S4 RNA-binding domain; the sequence is LSVVKLLQVS…CGKKRHLKVV (66 aa).

This sequence belongs to the class-I aminoacyl-tRNA synthetase family. TyrS type 1 subfamily. In terms of assembly, homodimer.

Its subcellular location is the cytoplasm. It carries out the reaction tRNA(Tyr) + L-tyrosine + ATP = L-tyrosyl-tRNA(Tyr) + AMP + diphosphate + H(+). In terms of biological role, catalyzes the attachment of tyrosine to tRNA(Tyr) in a two-step reaction: tyrosine is first activated by ATP to form Tyr-AMP and then transferred to the acceptor end of tRNA(Tyr). The polypeptide is Tyrosine--tRNA ligase (Ehrlichia ruminantium (strain Gardel)).